Here is a 398-residue protein sequence, read N- to C-terminus: tRNA-specific 2-thiouridylase MnmA (398 aa).

ATP-binding positions include 18 to 25 (AMSGGVDS) and leucine 44. Cysteine 112 functions as the Nucleophile in the catalytic mechanism. Cysteine 112 and cysteine 213 are joined by a disulfide. Residue glycine 136 coordinates ATP. An interaction with tRNA region spans residues 163-165 (RDQ). Cysteine 213 (cysteine persulfide intermediate) is an active-site residue.

This sequence belongs to the MnmA/TRMU family.

Its subcellular location is the cytoplasm. The catalysed reaction is S-sulfanyl-L-cysteinyl-[protein] + uridine(34) in tRNA + AH2 + ATP = 2-thiouridine(34) in tRNA + L-cysteinyl-[protein] + A + AMP + diphosphate + H(+). In terms of biological role, catalyzes the 2-thiolation of uridine at the wobble position (U34) of tRNA, leading to the formation of s(2)U34. This chain is tRNA-specific 2-thiouridylase MnmA, found in Sinorhizobium medicae (strain WSM419) (Ensifer medicae).